An 862-amino-acid polypeptide reads, in one-letter code: MSLLHTFKETLKPCGSFPSSSSLRVSSTQELEPSRKPPKSSLSQQLLRLDDSYFLPSKHESKISKTQVEDFDHNEDDHKRNIKFDEEEVDEDDERSIEFGRPGLSRAEFDYSGPYEPLMLSSIGEIPIIHVPASINCRLLEHQREGVKFMYNLYKNNHGGILGDDMGLGKTIQTIAFLAAVYGKDGDAGESCLLESDKGPVLIICPSSIIHNWESEFSRWASFFKVSVYHGSNRDMILEKLKARGVEVLVTSFDTFRIQGPVLSGINWEIVIADEAHRLKNEKSKLYEACLEIKTKKRIGLTGTVMQNKISELFNLFEWVAPGSLGTREHFRDFYDEPLKLGQRATAPERFVQIADKRKQHLGSLLRKYMLRRTKEETIGHLMMGKEDNVVFCQMSQLQRRVYQRMIQLPEIQCLVNKDNPCACGSPLKQSECCRRIVPDGTIWSYLHRDNHDGCDSCPFCLVLPCLMKLQQISNHLELIKPNPKDEPEKQKKDAEFVSTVFGTDIDLLGGISASKSFMDLSDVKHCGKMRALEKLMASWISKGDKILLFSYSVRMLDILEKFLIRKGYSFARLDGSTPTNLRQSLVDDFNASPSKQVFLISTKAGGLGLNLVSANRVVIFDPNWNPSHDLQAQDRSFRYGQKRHVVVFRLLSAGSLEELVYTRQVYKQQLSNIAVAGKMETRYFEGVQDCKEFQGELFGISNLFRDLSDKLFTSDIVELHRDSNIDENKKRSLLETGVSEDEKEEEVMCSYKPEMEKPILKDLGIVYAHRNEDIINIGETTTSTSQRLNGDGNSADRKKKKRKGCSEEEDMSSSNREQKREKYKMLAEFKGMEILEFSRWVLSASPFDREKLLQDFLERVK.

2 disordered regions span residues 13–43 (PCGS…SSLS) and 58–95 (KHES…DDER). Residues 16–27 (SFPSSSSLRVSS) are compositionally biased toward low complexity. Over residues 58–84 (KHESKISKTQVEDFDHNEDDHKRNIKF) the composition is skewed to basic and acidic residues. Residues 85 to 95 (DEEEVDEDDER) show a composition bias toward acidic residues. In terms of domain architecture, Helicase ATP-binding spans 151–323 (YNLYKNNHGG…FNLFEWVAPG (173 aa)). Residue 164–171 (DDMGLGKT) participates in ATP binding. Residues 274–277 (DEAH) carry the DEAH box motif. Residues 274–294 (DEAHRLKNEKSKLYEACLEIK) adopt a coiled-coil conformation. The Helicase C-terminal domain occupies 532–685 (ALEKLMASWI…VAGKMETRYF (154 aa)). Positions 782 to 793 (TTSTSQRLNGDG) are enriched in polar residues. A disordered region spans residues 782–821 (TTSTSQRLNGDGNSADRKKKKRKGCSEEEDMSSSNREQKR).

The protein belongs to the SNF2/RAD54 helicase family.

Its function is as follows. May be involved in early DNA damage response. Probable chromatin remodeling factor. This chain is Switch 2, found in Arabidopsis thaliana (Mouse-ear cress).